Consider the following 376-residue polypeptide: MSGKSPAQTRVVVGMSGGVDSSVTALLLKEQGYDVIGVFMKNWDDTDENGVCTATEDYKDVAAVADQIGVPYYSVNFEKEYWDRVFEYFLAEYRAGRTPNPDVMCNKEIKFKAFLDYAMELGADYVATGHYAQVRTDENGIVHMLRGADNNKDQTYFLSQLTQEQLKKTMFPLGHLEKPEVRKIAEKAGLATAKKKDSTGICFIGEKNFKKFLGEYLPAQPGKMMTLDGIEMGNHAGLMYYTIGQRGGLGIGGQHGQLTSDPWFVVGKDLTTNTLYVGQGFHHEHLYSTSLDASDLSFTREMPETFDLHCTAKFRYRQEDTGVTIHVNGDKVTVDFDEPVRAITPGQAVVFYDGEECLGGAMIDVAYKAQKVMQYQ.

ATP is bound by residues 14 to 21 (GMSGGVDS) and methionine 40. The segment at 100 to 102 (NPD) is interaction with target base in tRNA. The Nucleophile role is filled by cysteine 105. Residues cysteine 105 and cysteine 202 are joined by a disulfide bond. Residue glycine 129 coordinates ATP. Positions 152–154 (KDQ) are interaction with tRNA. Residue cysteine 202 is the Cysteine persulfide intermediate of the active site. The segment at 315 to 316 (RY) is interaction with tRNA.

This sequence belongs to the MnmA/TRMU family.

Its subcellular location is the cytoplasm. It carries out the reaction S-sulfanyl-L-cysteinyl-[protein] + uridine(34) in tRNA + AH2 + ATP = 2-thiouridine(34) in tRNA + L-cysteinyl-[protein] + A + AMP + diphosphate + H(+). In terms of biological role, catalyzes the 2-thiolation of uridine at the wobble position (U34) of tRNA, leading to the formation of s(2)U34. This Lactococcus lactis subsp. lactis (strain IL1403) (Streptococcus lactis) protein is tRNA-specific 2-thiouridylase MnmA.